A 426-amino-acid polypeptide reads, in one-letter code: Gamma-glutamyl phosphate reductase (426 aa).

It belongs to the gamma-glutamyl phosphate reductase family.

The protein resides in the cytoplasm. The enzyme catalyses L-glutamate 5-semialdehyde + phosphate + NADP(+) = L-glutamyl 5-phosphate + NADPH + H(+). It participates in amino-acid biosynthesis; L-proline biosynthesis; L-glutamate 5-semialdehyde from L-glutamate: step 2/2. In terms of biological role, catalyzes the NADPH-dependent reduction of L-glutamate 5-phosphate into L-glutamate 5-semialdehyde and phosphate. The product spontaneously undergoes cyclization to form 1-pyrroline-5-carboxylate. The chain is Gamma-glutamyl phosphate reductase from Cupriavidus necator (strain ATCC 17699 / DSM 428 / KCTC 22496 / NCIMB 10442 / H16 / Stanier 337) (Ralstonia eutropha).